The sequence spans 734 residues: Meiotic driver SPOK1 (734 aa).

Positions 4 to 41 (KDRIAQLLRELEEAKARVEEAKAREAQERCEKERLQLE) form a coiled coil. Disordered stretches follow at residues 180-222 (ELTQ…ICSN) and 414-499 (LSSA…MADP). The segment covering 416–429 (SAPSSQNTDISEYT) has biased composition (polar residues). Residues 457–468 (NEHDEHDEDHSE) are compositionally biased toward basic and acidic residues.

Its subcellular location is the cytoplasm. The protein resides in the nucleus. In terms of biological role, promotes unequal transmission of alleles from the parental zygote to progeny spores by acting as poison/antidote system, leading to poisoning of progeny that do not inherit the allele. May possess DNA nuclease activity that leads to spore killing, and a kinase activity that confers resistance to the nuclease activity. Can suppress meiotic drive by the P.anserina SPOK2, SPOK3 and SPOK4 proteins. The protein is Meiotic driver SPOK1 of Podospora comata.